A 242-amino-acid chain; its full sequence is Anamorsin homolog (242 aa).

The N-terminal SAM-like domain stretch occupies residues 1–140; the sequence is MMNFADTLVI…NVTAENPDFL (140 aa). Residues 140–159 are disordered; sequence LSNEDDNDEHSSDGEAHENA. Residues 141-162 are linker; the sequence is SNEDDNDEHSSDGEAHENAEDN. Residues 148–159 are compositionally biased toward basic and acidic residues; sequence EHSSDGEAHENA. 4 residues coordinate [4Fe-4S] cluster: C205, C208, C216, and C219. 2 consecutive short sequence motifs (cx2C motif) follow at residues 205–208 and 216–219; these read CGNC and CASC. The tract at residues 205–219 is fe-S binding site B; that stretch reads CGNCYLGDAFRCASC.

The protein belongs to the anamorsin family. In terms of assembly, monomer. Requires [4Fe-4S] cluster as cofactor.

The protein resides in the cytoplasm. It localises to the mitochondrion intermembrane space. Component of the cytosolic iron-sulfur (Fe-S) protein assembly (CIA) machinery. Required for the maturation of extramitochondrial Fe-S proteins. Part of an electron transfer chain functioning in an early step of cytosolic Fe-S biogenesis, facilitating the de novo assembly of a [4Fe-4S] cluster on the cytosolic Fe-S scaffold complex. Electrons are transferred from NADPH via a FAD- and FMN-containing diflavin oxidoreductase. Together with the diflavin oxidoreductase, also required for the assembly of the diferric tyrosyl radical cofactor of ribonucleotide reductase (RNR), probably by providing electrons for reduction during radical cofactor maturation in the catalytic small subunit. The sequence is that of Anamorsin homolog from Plasmodium vivax (strain Salvador I).